We begin with the raw amino-acid sequence, 229 residues long: uncharacterized protein (229 aa).

This is an uncharacterized protein from Dictyostelium discoideum (Social amoeba).